The chain runs to 119 residues: Promotilin (119 aa).

A signal peptide spans 1–25; it reads MVSRKAVVVLLVVHAAAMLASHTEA. The tract at residues 40–72 is disordered; the sequence is EKERNKGQKKSLSVQQASEELGPLDPSEPTKEE.

Belongs to the motilin family.

Its subcellular location is the secreted. Plays an important role in the regulation of interdigestive gastrointestinal motility and indirectly causes rhythmic contraction of duodenal and colonic smooth muscle. The chain is Promotilin (MLN) from Sus scrofa (Pig).